The primary structure comprises 414 residues: uncharacterized protein (414 aa).

The tract at residues 87–117 (KTNDDNKTNGRETHLRPSPSKPEYTGRPTQN) is disordered. Positions 88-101 (TNDDNKTNGRETHL) are enriched in basic and acidic residues. The stretch at 243 to 405 (SMLQSSIDKL…RNKLEMEVER (163 aa)) forms a coiled coil.

This is an uncharacterized protein from Encephalitozoon cuniculi (strain GB-M1) (Microsporidian parasite).